A 774-amino-acid polypeptide reads, in one-letter code: MSALHAFPGGLCLPANKERSTALPIQQAPLAQRYIVPLGQHIGAPARPCVEVGQAVLKGQTIALPDGTVSAALHAPTSGTVVAIGAHPYPHASGLPAPAIVIASDGLERWTELHPCPDFRAESPLALLERIRAAGIGGLGGAGFPTAAKLAARPAEKIHTLVVNGAECEPYISADDLLMRERATQVLGGIDILVQILCPEEVLVGIEDDKPEAIAALGAALGERPYRIVALPTRYPSGGERQLIQLLTGREVPADGLPADIGILCQNVGTLAAVHDAVVLGRPLISRITTLAGGALERPMNVEALIGTPVHELLAFAGLAEGRLERVLMGGPMMGFALPDLSVPLIKTCNCLLAGDATELPEPVPAMPCIRCGDCAQVCPVSLLPQQLHFFALGDEHEQLLAHNLFDCIECGACAYVCPSSIPLVQYYRASKAEIREQRQKLLKAEQSRERFEQRQARLRRDEERRAAERAQRAEKAALARAAQAEREEAAPATAVDPVQAAIERARARKQAGSGSERLKRLKIEASMARVALKKAEKQLLSHDTPEQHGLVAELRAAAEAADKALADAEASLPRDLPSAPPAALDDEAELKKAKAQAAMARAQLKRSEKAFGEAPGAEQRATLDELRAEVERCEATLARLERHAPKPAAPGDDGQAALKRAKIALVGKRAALKKAEQAGVMDSELERLRGELQAAERDLHAAEDACGKPAPELVRIDKRPVDPRIRELKTELAYARAALKKLERLANADAAALAAARARLSAAERALTEHGTE.

4Fe-4S ferredoxin-type domains lie at 359-389 (ELPE…QQLH) and 399-428 (QLLA…VQYY). [4Fe-4S] cluster-binding residues include cysteine 369, cysteine 372, cysteine 375, cysteine 379, cysteine 408, cysteine 411, cysteine 414, and cysteine 418. Residues 453–490 (EQRQARLRRDEERRAAERAQRAEKAALARAAQAEREEA) are compositionally biased toward basic and acidic residues. Residues 453 to 493 (EQRQARLRRDEERRAAERAQRAEKAALARAAQAEREEAAPA) form a disordered region.

It belongs to the 4Fe4S bacterial-type ferredoxin family. RnfC subfamily. In terms of assembly, the complex is composed of six subunits: RnfA, RnfB, RnfC, RnfD, RnfE and RnfG. It depends on [4Fe-4S] cluster as a cofactor.

It localises to the cell inner membrane. Part of a membrane-bound complex that couples electron transfer with translocation of ions across the membrane. This chain is Ion-translocating oxidoreductase complex subunit C, found in Pseudomonas aeruginosa (strain ATCC 15692 / DSM 22644 / CIP 104116 / JCM 14847 / LMG 12228 / 1C / PRS 101 / PAO1).